Consider the following 461-residue polypeptide: tRNA modification GTPase MnmE (461 aa).

3 residues coordinate (6S)-5-formyl-5,6,7,8-tetrahydrofolate: lysine 32, glutamate 89, and lysine 128. The TrmE-type G domain maps to 224–387 (GHALSIVGKP…LGQKISAFFP (164 aa)). Asparagine 234 contributes to the K(+) binding site. GTP-binding positions include 234–239 (NAGKSS), 253–259 (SDIKGTT), and 278–281 (DTAG). Serine 238 contributes to the Mg(2+) binding site. Residues serine 253, isoleucine 255, and threonine 258 each contribute to the K(+) site. Threonine 259 serves as a coordination point for Mg(2+). Lysine 461 is a binding site for (6S)-5-formyl-5,6,7,8-tetrahydrofolate.

It belongs to the TRAFAC class TrmE-Era-EngA-EngB-Septin-like GTPase superfamily. TrmE GTPase family. Homodimer. Heterotetramer of two MnmE and two MnmG subunits. K(+) is required as a cofactor.

It is found in the cytoplasm. Its function is as follows. Exhibits a very high intrinsic GTPase hydrolysis rate. Involved in the addition of a carboxymethylaminomethyl (cmnm) group at the wobble position (U34) of certain tRNAs, forming tRNA-cmnm(5)s(2)U34. This is tRNA modification GTPase MnmE from Helicobacter pylori (strain HPAG1).